Reading from the N-terminus, the 340-residue chain is Short-chain dehydrogenase/reductase prx1 (340 aa).

NADP(+)-binding residues include isoleucine 60, lysine 84, aspartate 104, asparagine 131, and lysine 162. Residue serine 184 is the Proton donor of the active site. Positions 210 and 214 each coordinate NADP(+). The active-site Proton acceptor is the tyrosine 210. Lysine 214 (lowers pKa of active site Tyr) is an active-site residue.

The protein belongs to the short-chain dehydrogenases/reductases (SDR) family.

The protein operates within sesquiterpene biosynthesis. Functionally, short-chain dehydrogenase/reductase; part of the gene cluster that mediates the biosynthesis of PR-toxin, a bicyclic sesquiterpene belonging to the eremophilane class and acting as a mycotoxin. The first step of the pathway is catalyzed by the aristolochene synthase which performs the cyclization of trans,trans-farnesyl diphosphate (FPP) to the bicyclic sesquiterpene aristolochene. Following the formation of aristolochene, the non-oxygenated aristolochene is converted to the trioxygenated intermediate eremofortin B, via 7-epi-neopetasone. This conversion appears to involve three enzymes, a hydroxysterol oxidase-like enzyme, the quinone-oxidase prx3 that forms the quinone-type-structure in the bicyclic nucleus of aristolochene with the C8-oxo group and the C-3 hydroxyl group, and the P450 monooxygenase ORF6 that introduces the epoxide at the double bond between carbons 1 and 2. No monoxy or dioxy-intermediates have been reported to be released to the broth, so these three early oxidative reactions may be coupled together. Eremofortin B is further oxidized by another P450 monooxygenase, that introduces a second epoxide between carbons 7 and 11 prior to acetylation to eremofortin A by the acetyltransferase ORF8. The second epoxidation may be performed by a second P450 monooxygenase. After the acetylation step, eremofortin A is converted to eremofortin C and then to PR-toxin. First the conversion of eremofortin A to eremofortin C proceeds by oxidation of the side chain of the molecule at C-12 and is catalyzed by the short-chain oxidoreductase prx1. The cytochrome P450 monooxygenase ORF6 is probably also involved in this step. The primary alcohol formed at C-12 is finally oxidized by the short-chain alcohol dehydrogenase prx4 that forms PR-toxin. This chain is Short-chain dehydrogenase/reductase prx1, found in Penicillium roqueforti (strain FM164).